A 201-amino-acid polypeptide reads, in one-letter code: 3-isopropylmalate dehydratase small subunit (201 aa).

Belongs to the LeuD family. LeuD type 1 subfamily. As to quaternary structure, heterodimer of LeuC and LeuD.

It catalyses the reaction (2R,3S)-3-isopropylmalate = (2S)-2-isopropylmalate. The protein operates within amino-acid biosynthesis; L-leucine biosynthesis; L-leucine from 3-methyl-2-oxobutanoate: step 2/4. In terms of biological role, catalyzes the isomerization between 2-isopropylmalate and 3-isopropylmalate, via the formation of 2-isopropylmaleate. The protein is 3-isopropylmalate dehydratase small subunit of Ruegeria pomeroyi (strain ATCC 700808 / DSM 15171 / DSS-3) (Silicibacter pomeroyi).